Consider the following 645-residue polypeptide: Acetyl-coenzyme A synthetase (645 aa).

Residues 190 to 193 and Thr-309 each bind CoA; that span reads RGGR. ATP contacts are provided by residues 385–387, 409–414, Asp-498, and Arg-513; these read GEP and DTWWQT. Ser-521 is a binding site for CoA. An ATP-binding site is contributed by Arg-524. Mg(2+) is bound by residues Val-535, His-537, and Val-540. Arg-582 serves as a coordination point for CoA. Position 607 is an N6-acetyllysine (Lys-607).

It belongs to the ATP-dependent AMP-binding enzyme family. It depends on Mg(2+) as a cofactor. Acetylated. Deacetylation by the SIR2-homolog deacetylase activates the enzyme.

The catalysed reaction is acetate + ATP + CoA = acetyl-CoA + AMP + diphosphate. Functionally, catalyzes the conversion of acetate into acetyl-CoA (AcCoA), an essential intermediate at the junction of anabolic and catabolic pathways. AcsA undergoes a two-step reaction. In the first half reaction, AcsA combines acetate with ATP to form acetyl-adenylate (AcAMP) intermediate. In the second half reaction, it can then transfer the acetyl group from AcAMP to the sulfhydryl group of CoA, forming the product AcCoA. This Methylocella silvestris (strain DSM 15510 / CIP 108128 / LMG 27833 / NCIMB 13906 / BL2) protein is Acetyl-coenzyme A synthetase.